Consider the following 215-residue polypeptide: Thiamine-phosphate synthase (215 aa).

4-amino-2-methyl-5-(diphosphooxymethyl)pyrimidine contacts are provided by residues 43-47 and asparagine 78; that span reads QFRDK. Mg(2+)-binding residues include aspartate 79 and aspartate 98. Serine 117 is a 4-amino-2-methyl-5-(diphosphooxymethyl)pyrimidine binding site. 2-[(2R,5Z)-2-carboxy-4-methylthiazol-5(2H)-ylidene]ethyl phosphate is bound at residue 143–145; sequence TNS. 4-amino-2-methyl-5-(diphosphooxymethyl)pyrimidine is bound at residue lysine 146. Residues glycine 174 and 194-195 each bind 2-[(2R,5Z)-2-carboxy-4-methylthiazol-5(2H)-ylidene]ethyl phosphate; that span reads IS.

The protein belongs to the thiamine-phosphate synthase family. The cofactor is Mg(2+).

It catalyses the reaction 2-[(2R,5Z)-2-carboxy-4-methylthiazol-5(2H)-ylidene]ethyl phosphate + 4-amino-2-methyl-5-(diphosphooxymethyl)pyrimidine + 2 H(+) = thiamine phosphate + CO2 + diphosphate. It carries out the reaction 2-(2-carboxy-4-methylthiazol-5-yl)ethyl phosphate + 4-amino-2-methyl-5-(diphosphooxymethyl)pyrimidine + 2 H(+) = thiamine phosphate + CO2 + diphosphate. The enzyme catalyses 4-methyl-5-(2-phosphooxyethyl)-thiazole + 4-amino-2-methyl-5-(diphosphooxymethyl)pyrimidine + H(+) = thiamine phosphate + diphosphate. The protein operates within cofactor biosynthesis; thiamine diphosphate biosynthesis; thiamine phosphate from 4-amino-2-methyl-5-diphosphomethylpyrimidine and 4-methyl-5-(2-phosphoethyl)-thiazole: step 1/1. Functionally, condenses 4-methyl-5-(beta-hydroxyethyl)thiazole monophosphate (THZ-P) and 2-methyl-4-amino-5-hydroxymethyl pyrimidine pyrophosphate (HMP-PP) to form thiamine monophosphate (TMP). This chain is Thiamine-phosphate synthase, found in Lactococcus lactis subsp. lactis (strain IL1403) (Streptococcus lactis).